The following is a 458-amino-acid chain: MSDLLSVFLHLLLLFKLVAPVTFRHHRYDDLVRTLYKVQNECPGITRVYSIGRSVEGRHLYVLEFSDHPGIHEPLEPEVKYVGNMHGNEALGRELMLQLSEFLCEEFRNRNQRIVQLIQDTRIHILPSMNPDGYEVAAAQGPNKPGYLVGRNNANGVDLNRNFPDLNTYIYYNEKYGGPNHHLPLPDNWKSQVEPETRAVIRWMHSFNFVLSANLHGGAVVANYPYDKSFEHRVRGVRRTASTPTPDDKLFQKLAKVYSYAHGWMFQGWNCGDYFPDGITNGASWYSLSKGMQDFNYLHTNCFEITLELSCDKFPPEEELQREWLGNREALIQFLEQVHQGIKGMVLDENYNNLANAVISVSGINHDVTSGDHGDYFRLLLPGIYTVSATAPGYDPETVTVTVGPAEPTLVNFHLKRSIPQVSPVRRAPSRRHGVRAKVQPQARKKEMEMRQLQRGPA.

The first 20 residues, methionine 1–proline 20, serve as a signal peptide directing secretion. Positions arginine 24–valine 338 constitute a Peptidase M14 domain. Residues cysteine 42 and cysteine 104 are joined by a disulfide bond. Positions 86, 89, and 216 each coordinate Zn(2+). A disulfide bridge links cysteine 271 with cysteine 311. The active-site Proton donor/acceptor is glutamate 308. 3 O-linked (GalNAc...) threonine glycosylation sites follow: threonine 400, threonine 402, and threonine 409. Residues serine 423–alanine 458 form a disordered region.

The protein belongs to the peptidase M14 family. In terms of assembly, tetramer of two catalytic chains and two glycosylated inactive chains. Zn(2+) serves as cofactor. As to expression, synthesized in the liver and secreted in plasma.

It localises to the secreted. The protein resides in the extracellular space. The catalysed reaction is Release of a C-terminal basic amino acid, preferentially lysine.. In terms of biological role, protects the body from potent vasoactive and inflammatory peptides containing C-terminal Arg or Lys (such as kinins or anaphylatoxins) which are released into the circulation. This is Carboxypeptidase N catalytic chain (CPN1) from Homo sapiens (Human).